We begin with the raw amino-acid sequence, 161 residues long: Protein-export protein SecB (161 aa).

Belongs to the SecB family. In terms of assembly, homotetramer, a dimer of dimers. One homotetramer interacts with 1 SecA dimer.

The protein resides in the cytoplasm. Its function is as follows. One of the proteins required for the normal export of preproteins out of the cell cytoplasm. It is a molecular chaperone that binds to a subset of precursor proteins, maintaining them in a translocation-competent state. It also specifically binds to its receptor SecA. In Pseudomonas putida (strain ATCC 700007 / DSM 6899 / JCM 31910 / BCRC 17059 / LMG 24140 / F1), this protein is Protein-export protein SecB.